The sequence spans 304 residues: UDP-3-O-acyl-N-acetylglucosamine deacetylase (304 aa).

Zn(2+)-binding residues include H78, H237, and D241. Residue H264 is the Proton donor of the active site.

Belongs to the LpxC family. Zn(2+) serves as cofactor.

It carries out the reaction a UDP-3-O-[(3R)-3-hydroxyacyl]-N-acetyl-alpha-D-glucosamine + H2O = a UDP-3-O-[(3R)-3-hydroxyacyl]-alpha-D-glucosamine + acetate. Its pathway is glycolipid biosynthesis; lipid IV(A) biosynthesis; lipid IV(A) from (3R)-3-hydroxytetradecanoyl-[acyl-carrier-protein] and UDP-N-acetyl-alpha-D-glucosamine: step 2/6. In terms of biological role, catalyzes the hydrolysis of UDP-3-O-myristoyl-N-acetylglucosamine to form UDP-3-O-myristoylglucosamine and acetate, the committed step in lipid A biosynthesis. The polypeptide is UDP-3-O-acyl-N-acetylglucosamine deacetylase (Legionella pneumophila (strain Lens)).